A 160-amino-acid polypeptide reads, in one-letter code: Glucan endo-1,3-beta-glucosidase, acidic isoform PR-O (160 aa).

The active-site Nucleophile is E81.

This sequence belongs to the glycosyl hydrolase 17 family. Post-translationally, the N-terminus is blocked.

It is found in the secreted. The protein localises to the extracellular space. It catalyses the reaction Hydrolysis of (1-&gt;3)-beta-D-glucosidic linkages in (1-&gt;3)-beta-D-glucans.. In terms of biological role, implicated in the defense of plants against pathogens. The chain is Glucan endo-1,3-beta-glucosidase, acidic isoform PR-O (PR0) from Nicotiana tabacum (Common tobacco).